An 845-amino-acid polypeptide reads, in one-letter code: Beta-mannosidase B (845 aa).

The segment at 1-20 (MSKLQQFPLSKGWSFRDSED) is disordered. Asparagine 252 carries an N-linked (GlcNAc...) asparagine glycan. Residue glutamate 432 is the Proton donor of the active site. Residues asparagine 717 and asparagine 723 are each glycosylated (N-linked (GlcNAc...) asparagine).

The protein belongs to the glycosyl hydrolase 2 family. Beta-mannosidase B subfamily.

It carries out the reaction Hydrolysis of terminal, non-reducing beta-D-mannose residues in beta-D-mannosides.. Its pathway is glycan metabolism; N-glycan degradation. Exoglycosidase that cleaves the single beta-linked mannose residue from the non-reducing end of beta-mannosidic oligosaccharides of various complexity and length. Prefers mannobiose over mannotriose and has no activity against polymeric mannan. Is also severely restricted by galactosyl substitutions at the +1 subsite. The chain is Beta-mannosidase B (mndB) from Neosartorya fischeri (strain ATCC 1020 / DSM 3700 / CBS 544.65 / FGSC A1164 / JCM 1740 / NRRL 181 / WB 181) (Aspergillus fischerianus).